The following is a 199-amino-acid chain: Inner membrane-spanning protein YciB (199 aa).

The next 6 membrane-spanning stretches (helical) occupy residues 4 to 24, 36 to 56, 64 to 84, 90 to 110, 135 to 155, and 162 to 182; these read FIDF…PRIV, IFSA…TLFL, GQWI…TFQS, WKAP…HFIG, LAWV…AFTF, and FKVF…GVFL.

It belongs to the YciB family.

It localises to the cell inner membrane. Functionally, plays a role in cell envelope biogenesis, maintenance of cell envelope integrity and membrane homeostasis. The sequence is that of Inner membrane-spanning protein YciB from Azotobacter vinelandii (strain DJ / ATCC BAA-1303).